Consider the following 534-residue polypeptide: ATP-dependent rRNA helicase RRP3 (534 aa).

Residues 67-107 form a disordered region; it reads KQQALQKQQKQQKQQEQENANHNQTESSLSSSSSTTSSSIT. 2 stretches are compositionally biased toward low complexity: residues 68 to 80 and 91 to 107; these read QQALQKQQKQQKQ and TESSLSSSSSTTSSSIT. The short motif at 118–146 is the Q motif element; it reads KTFKELNLVPDLLESIESMKFTKPTPIQS. Residues 149–320 enclose the Helicase ATP-binding domain; sequence IPHALEGKDI…RASLHNPVRV (172 aa). Residue 162–169 coordinates ATP; the sequence is AQTGSGKT. A DEAD box motif is present at residues 268-271; the sequence is DEAD. A Helicase C-terminal domain is found at 347 to 492; the sequence is ILIHLLNEFM…EDKPPKEVLD (146 aa). Basic and acidic residues-rich tracts occupy residues 505 to 517 and 525 to 534; these read AIRQTKEIHDKRN and NRDDADREER. Positions 505 to 534 are disordered; the sequence is AIRQTKEIHDKRNGGGGRRRNRDDADREER.

This sequence belongs to the DEAD box helicase family. DDX47/RRP3 subfamily. In terms of assembly, interacts with the SSU processome.

Its subcellular location is the nucleus. The catalysed reaction is ATP + H2O = ADP + phosphate + H(+). Its function is as follows. ATP-dependent rRNA helicase required for pre-ribosomal RNA processing. Involved in the maturation of the 35S-pre-rRNA and to its cleavage to mature 18S rRNA. This chain is ATP-dependent rRNA helicase RRP3, found in Candida albicans (strain SC5314 / ATCC MYA-2876) (Yeast).